A 430-amino-acid polypeptide reads, in one-letter code: Adenylosuccinate synthetase (430 aa).

GTP contacts are provided by residues 12-18 (GDEGKGK) and 40-42 (GHT). Asp13 acts as the Proton acceptor in catalysis. Residues Asp13 and Gly40 each coordinate Mg(2+). IMP contacts are provided by residues 13–16 (DEGK), 38–41 (NAGH), Thr128, Arg142, Gln223, Thr238, and Arg302. Residue His41 is the Proton donor of the active site. 298 to 304 (TTTGRPR) is a binding site for substrate. Residues Arg304, 330-332 (SID), and 412-414 (SVG) contribute to the GTP site.

Belongs to the adenylosuccinate synthetase family. In terms of assembly, homodimer. The cofactor is Mg(2+).

It is found in the cytoplasm. It carries out the reaction IMP + L-aspartate + GTP = N(6)-(1,2-dicarboxyethyl)-AMP + GDP + phosphate + 2 H(+). Its pathway is purine metabolism; AMP biosynthesis via de novo pathway; AMP from IMP: step 1/2. Plays an important role in the de novo pathway of purine nucleotide biosynthesis. Catalyzes the first committed step in the biosynthesis of AMP from IMP. The chain is Adenylosuccinate synthetase from Streptococcus suis (strain 98HAH33).